Consider the following 158-residue polypeptide: Transcriptional regulatory protein DoeX (158 aa).

Residues 3 to 64 (LDRYDLKILE…RLNTDVLVKR (62 aa)) form the HTH asnC-type domain. A DNA-binding region (H-T-H motif) is located at residues 22–41 (KSKLAEAINLSVSPCWERVR).

The protein localises to the cytoplasm. Acts as a transcriptional regulator. It binds DNA specifically to a fragment from the doeA promoter region. The sequence is that of Transcriptional regulatory protein DoeX (doeX) from Halomonas elongata (strain ATCC 33173 / DSM 2581 / NBRC 15536 / NCIMB 2198 / 1H9).